Here is a 258-residue protein sequence, read N- to C-terminus: Acyl-[acyl-carrier-protein]--UDP-N-acetylglucosamine O-acyltransferase (258 aa).

This sequence belongs to the transferase hexapeptide repeat family. LpxA subfamily. In terms of assembly, homotrimer.

Its subcellular location is the cytoplasm. The enzyme catalyses a (3R)-hydroxyacyl-[ACP] + UDP-N-acetyl-alpha-D-glucosamine = a UDP-3-O-[(3R)-3-hydroxyacyl]-N-acetyl-alpha-D-glucosamine + holo-[ACP]. Its pathway is glycolipid biosynthesis; lipid IV(A) biosynthesis; lipid IV(A) from (3R)-3-hydroxytetradecanoyl-[acyl-carrier-protein] and UDP-N-acetyl-alpha-D-glucosamine: step 1/6. Its function is as follows. Involved in the biosynthesis of lipid A, a phosphorylated glycolipid that anchors the lipopolysaccharide to the outer membrane of the cell. This Pseudomonas putida (strain W619) protein is Acyl-[acyl-carrier-protein]--UDP-N-acetylglucosamine O-acyltransferase.